We begin with the raw amino-acid sequence, 1076 residues long: MTEQRKSLIKLISAVIIILLLPVLFFRFIGDDPTKKAVNSTRQIAVVNEDTGVLSDEVKSDEEDKSAQFGKEVAAVLGERPDYSWTVVNRSAAETGLASKKYDAIVYIPSDFSKNILSYDKDHPQKATLEFSIQDNLNAVNKEKVQRELEDAQKTMNKKMSALYWNFVSQKVDNIRGEFDKIVNKESEFQNVMYNFYKPSSNDLAGEIKQQKDLIDELKKSMNEAQGTTKEKASTAEEAKNTLKEFIDTVERYKEYQENQKKLLLAAQDSTQQQIRTGLDAIQAQQKANQFSERMSGLATGIGQAKTQIGLTNLALNNAEKLRQNQVPLQEMGMKKIENDMFNAFLSRYKSQYEAIKYQNLNQLQENIGKNRLSLLKPKESDEKEDGEDTSDNKDDTDKEDIEDIKLDLEKQRDELKNVATEIKDISEGLKEPEQEKPTTPDAEEPSTDDSPNTEEPSNDIPTSDDQPTNEDTGSSEEGTQDNGSQNDVQTNIETGQKHQESSKNVPEQDTNTENTGTSKTDFSLIELADENDGSNQSDGLQGDGADGETDISGAKKRLNEAAIKLEEIENALQEKQEEHNNKLEKHIDELNQEIKELNKTVSKLNDQIGDLTKKLVDFDNNVNDAYRLIYNLEDEIIQTLQSRGYIDQKEKLSSIFSSRIETDNISNLMKYYNSLNLYKSTLNDNLDLGSLTIIKGEVIQEQDGNVQSVLALTPEESASWEALKNNTMQTDEDINSFIDGMTKFADDYSGYIRDSQAGVLDELTKISESAAKASEQLVTGATQESATFSNDGLSGTMALSVQDTVGQEVLQMSDMMGSLSDRQSGIIDYTTNMQQSVNDVQAKADTLNNNWGKNVASTKLVRNDVYGILGNTLVDGQNNGYVYDYLANPLKISGEVPEEKIQTVPPVVILVIVLISSLLIGYFSSYYQNAPLLVKGALFGILNILVGLMISLFGLNIYSLPDDQTIKWSVFTILLLVASSAFIRTAFRFGSIPGWVASAAMILFYVAPLIDLIMPNFTFEDPVSKVYIDIQYGTGHLFTMGITVLLIITVIAVALPLIIRLMAEHTAESDETYEA.

The chain crosses the membrane as a helical span at residues 9–29 (IKLISAVIIILLLPVLFFRFI). Disordered regions lie at residues 372-404 (RLSL…DIED) and 423-552 (IKDI…ETDI). Basic and acidic residues predominate over residues 423-439 (IKDISEGLKEPEQEKPT). Composition is skewed to polar residues over residues 449–495 (DDSP…NIET) and 503–522 (SKNV…SKTD). Residues 552 to 622 (ISGAKKRLNE…TKKLVDFDNN (71 aa)) are a coiled coil. 5 helical membrane passes run 904 to 924 (TVPP…IGYF), 938 to 958 (ALFG…GLNI), 964 to 984 (DQTI…SAFI), 995 to 1015 (GWVA…DLIM), and 1040 to 1060 (TMGI…PLII).

Belongs to the EsaA family.

It localises to the cell membrane. Functionally, required for YukE secretion. Probable component or regulator of the ESX/ESAT-6-like secretion system (BsEss). Bacteriophage SPP1 receptor. Essential for the irreversible adsorption of the bacteriophage. The protein is ESX secretion system protein YueB (yueB) of Bacillus subtilis (strain 168).